A 340-amino-acid polypeptide reads, in one-letter code: Entry-fusion complex protein OPG094 (340 aa).

Residue Gly-2 is the site of N-myristoyl glycine; by host attachment. The Virion surface segment spans residues 2–319 (GGRVSVELPK…VQHNIKHSFD (318 aa)). A helical; Signal-anchor for type II membrane protein transmembrane segment spans residues 320-340 (LKLHLISLLSLLVIWILIVAI).

The protein belongs to the orthopoxvirus OPG086 family. Interacts with OPG143. Component of the entry fusion complex (EFC) composed of OPG053, OPG076, OPG086, OPG094, OPG095, OPG099, OPG107, OPG143, OPG104, OPG147 and OPG155. Except for OPG095 and OPG053, each of the EFC proteins is required for assembly or stability of the complex. Post-translationally, unglycosylated because produced in viral factories instead of the classic ER -Golgi route.

It localises to the virion membrane. Its function is as follows. Component of the entry fusion complex (EFC), which consists of 11 proteins. During cell infection, this complex mediates entry of the virion core into the host cytoplasm by a two-step mechanism consisting of lipid mixing of the viral and cellular membranes and subsequent pore formation. The chain is Entry-fusion complex protein OPG094 (OPG094) from Homo sapiens (Human).